Reading from the N-terminus, the 527-residue chain is MTNQAAEVAKRRTFAIISHPDAGKTTITEKLLLMGKAIAVAGTVKSRKSDRHATSDWMEMEKQRGISITTSVMQFPYREHMINLLDTPGHEDFSEDTYRTLTAVDSALMVLDGGKGVEPRTIALMDVCRLRDTPIVSFINKLDRDIRDPIELLDEIEAVLKIKAAPITWPIGCYRDFKGVYHLAGDYIIVYTPGHGHERTEAKIIEKLDSDEARAHLGDEYDRFLEQLELVQGACHEFDQDEFINGQLTPVFFGTALGNFGVDHVLDAVVDWAPRPLARVAHERTVEPVEEKFTGFVFKIQANMDPKHRDRIAFMRICSGKYEKGMKMRHVRTGKDLRIGDALTFFSSEREQLEEAYAGDIIGLHNHGTIQIGDTFTEGEALGFTGIPHFAPELFRRVRLKDPLKSKQLRQGLQQLAEEGATQVFFPERSNDIILGAVGVLQFDVVASRLKEEYKVECAYEPITVWSARWISCDDKKKLEDFQVKAMENLAIDGGGHLTYLAPTRVNLSLMEERWPDVKFRATREHH.

Residues 9 to 277 (AKRRTFAIIS…AVVDWAPRPL (269 aa)) form the tr-type G domain. Residues 18 to 25 (SHPDAGKT), 86 to 90 (DTPGH), and 140 to 143 (NKLD) contribute to the GTP site.

The protein belongs to the TRAFAC class translation factor GTPase superfamily. Classic translation factor GTPase family. PrfC subfamily.

It is found in the cytoplasm. Functionally, increases the formation of ribosomal termination complexes and stimulates activities of RF-1 and RF-2. It binds guanine nucleotides and has strong preference for UGA stop codons. It may interact directly with the ribosome. The stimulation of RF-1 and RF-2 is significantly reduced by GTP and GDP, but not by GMP. This is Peptide chain release factor 3 from Pseudomonas putida (strain W619).